The chain runs to 169 residues: Neurotensin/neuromedin N (169 aa).

Residues 1-22 (MRGMNLQLVCLTLLAFSSWSLC) form the signal peptide.

Belongs to the neurotensin family. As to quaternary structure, interacts with NTSR1. Interacts with SORT1. Interacts with SORL1. In terms of processing, neurotensin is cleaved and degraded by Angiotensin-converting enzyme (ACE) and neprilysin (MME).

The protein localises to the secreted. It localises to the cytoplasmic vesicle. The protein resides in the secretory vesicle. Functionally, neurotensin may play an endocrine or paracrine role in the regulation of fat metabolism. It causes contraction of smooth muscle. In Mus musculus (Mouse), this protein is Neurotensin/neuromedin N (Nts).